The primary structure comprises 83 residues: MFLVDDLLVNPFLSLLDILHTMALDEMNDMEEIRDEIKENQLLYEIGERSETDYQQRKQQLEARLETAERIQAQMQGRIEVKR.

Belongs to the gas vesicle GvpG family. GvpF to GvpM interact with each other in vitro, and may form multi-subunit complex(es).

It is found in the gas vesicle. Functionally, proteins GvpF to GvpM might be involved in nucleating gas vesicle formation. A minor component of the gas vesicle. Gas vesicles are hollow, gas filled proteinaceous nanostructures found in some microorganisms. They allow positioning of halobacteria at the optimal depth for growth in the poorly aerated, shallow brine pools of their habitat. In terms of biological role, expression of a 9.5 kb mc-vac DNA fragment containing 2 divergently transcribed regions (gvpD-gvpE-gvpF-gvpG-gvpH-gvpI-gvpJ-gvpK-gvpL-gvpM and gvpA-gvpC-gvpN-gvpO) allows H.volcanii to produce gas vesicles. The protein is Gas vesicle protein G of Haloferax mediterranei (strain ATCC 33500 / DSM 1411 / JCM 8866 / NBRC 14739 / NCIMB 2177 / R-4) (Halobacterium mediterranei).